A 436-amino-acid polypeptide reads, in one-letter code: Serine--tRNA ligase (436 aa).

242–244 (TAE) provides a ligand contact to L-serine. ATP is bound at residue 273–275 (RSE). Glutamate 296 is a binding site for L-serine. Residue 360-363 (EISS) coordinates ATP. Position 395 (serine 395) interacts with L-serine.

The protein belongs to the class-II aminoacyl-tRNA synthetase family. Type-1 seryl-tRNA synthetase subfamily. Homodimer. The tRNA molecule binds across the dimer.

The protein resides in the cytoplasm. The enzyme catalyses tRNA(Ser) + L-serine + ATP = L-seryl-tRNA(Ser) + AMP + diphosphate + H(+). It carries out the reaction tRNA(Sec) + L-serine + ATP = L-seryl-tRNA(Sec) + AMP + diphosphate + H(+). It participates in aminoacyl-tRNA biosynthesis; selenocysteinyl-tRNA(Sec) biosynthesis; L-seryl-tRNA(Sec) from L-serine and tRNA(Sec): step 1/1. Functionally, catalyzes the attachment of serine to tRNA(Ser). Is also able to aminoacylate tRNA(Sec) with serine, to form the misacylated tRNA L-seryl-tRNA(Sec), which will be further converted into selenocysteinyl-tRNA(Sec). The sequence is that of Serine--tRNA ligase from Polynucleobacter necessarius subsp. necessarius (strain STIR1).